The following is a 252-amino-acid chain: 5'-methylthioadenosine/S-adenosylhomocysteine nucleosidase (252 aa).

The Proton acceptor role is filled by E20. Residues G86, I160, and 181–182 (ME) contribute to the substrate site. D205 functions as the Proton donor in the catalytic mechanism.

Belongs to the PNP/UDP phosphorylase family. MtnN subfamily. As to quaternary structure, homodimer.

It carries out the reaction S-adenosyl-L-homocysteine + H2O = S-(5-deoxy-D-ribos-5-yl)-L-homocysteine + adenine. The enzyme catalyses S-methyl-5'-thioadenosine + H2O = 5-(methylsulfanyl)-D-ribose + adenine. It catalyses the reaction 5'-deoxyadenosine + H2O = 5-deoxy-D-ribose + adenine. Its pathway is amino-acid biosynthesis; L-methionine biosynthesis via salvage pathway; S-methyl-5-thio-alpha-D-ribose 1-phosphate from S-methyl-5'-thioadenosine (hydrolase route): step 1/2. Functionally, catalyzes the irreversible cleavage of the glycosidic bond in both 5'-methylthioadenosine (MTA) and S-adenosylhomocysteine (SAH/AdoHcy) to adenine and the corresponding thioribose, 5'-methylthioribose and S-ribosylhomocysteine, respectively. Also cleaves 5'-deoxyadenosine, a toxic by-product of radical S-adenosylmethionine (SAM) enzymes, into 5-deoxyribose and adenine. Thus, is required for in vivo function of the radical SAM enzymes biotin synthase and lipoic acid synthase, that are inhibited by 5'-deoxyadenosine accumulation. The polypeptide is 5'-methylthioadenosine/S-adenosylhomocysteine nucleosidase (Buchnera aphidicola subsp. Baizongia pistaciae (strain Bp)).